The chain runs to 314 residues: ATP synthase gamma chain (314 aa).

The protein belongs to the ATPase gamma chain family. As to quaternary structure, F-type ATPases have 2 components, CF(1) - the catalytic core - and CF(0) - the membrane proton channel. CF(1) has five subunits: alpha(3), beta(3), gamma(1), delta(1), epsilon(1). CF(0) has three main subunits: a, b and c.

It localises to the cell membrane. Functionally, produces ATP from ADP in the presence of a proton gradient across the membrane. The gamma chain is believed to be important in regulating ATPase activity and the flow of protons through the CF(0) complex. This chain is ATP synthase gamma chain, found in Cutibacterium acnes (strain DSM 16379 / KPA171202) (Propionibacterium acnes).